A 1009-amino-acid polypeptide reads, in one-letter code: UvrABC system protein A (1009 aa).

32–39 (GLSGSGKS) is a binding site for ATP. ABC transporter domains are found at residues 314-592 (WSHG…AESQ) and 612-941 (RDPS…KFLR). Residue 645 to 652 (GVSGSGKS) participates in ATP binding. A C4-type zinc finger spans residues 744–770 (CENCSGDGTIKIEMNFLPDVYVPCEVC). The disordered stretch occupies residues 956–1009 (KAPRKTAARKTAAAKSTTKKTATVRTTNNTATKKAAAVTKKTAPAKKTTRARKA). Low complexity predominate over residues 964-997 (RKTAAAKSTTKKTATVRTTNNTATKKAAAVTKKT). The segment covering 998-1009 (APAKKTTRARKA) has biased composition (basic residues).

The protein belongs to the ABC transporter superfamily. UvrA family. In terms of assembly, forms a heterotetramer with UvrB during the search for lesions.

The protein resides in the cytoplasm. Functionally, the UvrABC repair system catalyzes the recognition and processing of DNA lesions. UvrA is an ATPase and a DNA-binding protein. A damage recognition complex composed of 2 UvrA and 2 UvrB subunits scans DNA for abnormalities. When the presence of a lesion has been verified by UvrB, the UvrA molecules dissociate. The chain is UvrABC system protein A from Streptomyces avermitilis (strain ATCC 31267 / DSM 46492 / JCM 5070 / NBRC 14893 / NCIMB 12804 / NRRL 8165 / MA-4680).